Here is a 138-residue protein sequence, read N- to C-terminus: MLQPARRKYRKEQKGRNTGVATRGNSVAFGDFGLKCTDRGRLTARQIEAARRAISRHVKRGGRIWIRVFPDKPISTKPAEVRMGNGKGNPEYYVAEIQPGKIVFEIVGVPEELAREAFRLAAAKLPLRTTFVSRQIGA.

The span at 1–13 (MLQPARRKYRKEQ) shows a compositional bias: basic residues. The interval 1-22 (MLQPARRKYRKEQKGRNTGVAT) is disordered.

The protein belongs to the universal ribosomal protein uL16 family. In terms of assembly, part of the 50S ribosomal subunit.

Binds 23S rRNA and is also seen to make contacts with the A and possibly P site tRNAs. The sequence is that of Large ribosomal subunit protein uL16 from Paracidovorax citrulli (strain AAC00-1) (Acidovorax citrulli).